An 877-amino-acid chain; its full sequence is MGSSKWGVLFGLLILHVIGYSIFLKGFFPSKVVVPGFNEFHTGQSPFMEHNEAKFDKLILMVVDAMRSDFLYSDHSHMKFVHQLINENCALPFTSYSNPPTVTLPRLKGITTGGTPSFLDAILNIADDKDNSQSLLNQDSWLHQFQNNSKVFNFFGDDTWLKLFPPEKFFNQYEGTNSFFVNDFTDVDNNVTRHLNDDLFNSKWDALILHYLGLDHIGHKGGPNSIFMRGKQEEMDGIIEKLYKETIDSNTLLVVMGDHGMNEIGNHGGSSMGETNPGLLFASPKFKMLKKNLKSPLAYNNDYKYYNYINQIDLVPTLATLLNFPIPKNNLGIVIKDILGLWKPEAQKSILMENSEQFMNIYEAKHANDTDIINEWKKSQDSGSIDVHYDFLSKIQGLLTSAATEYKYVDIYIGLSILVAMAIVAFGLFNWYFLVQATINPKYNWYFIGISIVYSIHFHASSLIEEEYQIWWFFSIICLFALYFNNHLKSLKYFWLILVGLRIIRSWSITGQKFTTPYTFSAYLLQNVDLLWVLNIATYFLTAILIYSQGSLIHCVTLREYESLRENVKDFGSLVTFIVTFVTCSISFSFKLCQYFNDGKRVPDWLLAFLNWTCESYGITIDPKEKNQLHELNIHLSKILFYCIGVLIIVRIVLGKIRKLHYGLLTDLSNVLTLFLLHQSRPEIVPIFLIFSLVKFSAAKLLANNEIVLRKNIDQLMIIITLFSLCMQNLSFFSMGNTNSLATVDLSNSYNGFKSYDVFLVGVLTYCSNFAGPIFWSLASLQLIFENNVVCFDTKKSSKDLVNLKFLKYQILYVKSLAGFLFYSMAGLSLVASCFNLRFHLFIWSVFSPKLLFFASWTLLTNILIDTISSLSILALC.

2 N-linked (GlcNAc...) asparagine glycosylation sites follow: asparagine 190 and asparagine 368. 5 helical membrane passes run 409 to 429, 443 to 463, 464 to 484, 528 to 548, and 570 to 590; these read VDIY…FGLF, YNWY…ASSL, IEEE…ALYF, VDLL…LIYS, and DFGS…SFSF. Asparagine 611 carries N-linked (GlcNAc...) asparagine glycosylation. A run of 6 helical transmembrane segments spans residues 634 to 654, 683 to 703, 716 to 736, 758 to 778, 817 to 837, and 854 to 876; these read IHLS…RIVL, EIVP…KLLA, LMII…FSMG, VFLV…FWSL, LAGF…CFNL, and FASW…ILAL.

This sequence belongs to the PIGG/PIGN/PIGO family. PIGG subfamily.

It is found in the endoplasmic reticulum membrane. The protein operates within glycolipid biosynthesis; glycosylphosphatidylinositol-anchor biosynthesis. In terms of biological role, ethanolamine phosphate transferase involved in glycosylphosphatidylinositol-anchor biosynthesis. Transfers ethanolamine phosphate to the GPI second mannose. In Debaryomyces hansenii (strain ATCC 36239 / CBS 767 / BCRC 21394 / JCM 1990 / NBRC 0083 / IGC 2968) (Yeast), this protein is GPI ethanolamine phosphate transferase 2 (LAS21).